The primary structure comprises 80 residues: DinI-like protein Z2083/ECs2153 (80 aa).

In Escherichia coli O157:H7, this protein is DinI-like protein Z2083/ECs2153.